The primary structure comprises 211 residues: FMN-dependent NADH:quinone oxidoreductase 3 (211 aa).

Residue 17 to 19 participates in FMN binding; that stretch reads SFS.

The protein belongs to the azoreductase type 1 family. In terms of assembly, homodimer. It depends on FMN as a cofactor.

It catalyses the reaction 2 a quinone + NADH + H(+) = 2 a 1,4-benzosemiquinone + NAD(+). It carries out the reaction N,N-dimethyl-1,4-phenylenediamine + anthranilate + 2 NAD(+) = 2-(4-dimethylaminophenyl)diazenylbenzoate + 2 NADH + 2 H(+). Its function is as follows. Quinone reductase that provides resistance to thiol-specific stress caused by electrophilic quinones. Also exhibits azoreductase activity. Catalyzes the reductive cleavage of the azo bond in aromatic azo compounds to the corresponding amines. The protein is FMN-dependent NADH:quinone oxidoreductase 3 of Halalkalibacterium halodurans (strain ATCC BAA-125 / DSM 18197 / FERM 7344 / JCM 9153 / C-125) (Bacillus halodurans).